The chain runs to 480 residues: Cytochrome c oxidase subunit 1 (480 aa).

Residues 22-42 form a helical membrane-spanning segment; the sequence is ISYLWLAYWFGMIGFYMSVLI. Ca(2+)-binding residues include Glu45 and Gly50. 8 helical membrane-spanning segments follow: residues 64–84, 109–129, 151–171, 194–214, 240–260, 278–298, 309–329, and 343–363; these read LLFTLHGLIMVFFNIMTGLFG, SLLLQPIGFVLVVSSVYLEIG, LIIFGLLAAGIASTLSSINFI, IVLTSFLLLLSLPVVTAVFLM, LFWFFGHPEVYIMILPGFGII, MILAMGSIALLGCLVWGHHMY, YFTTVTILIALPTGNKIFNWV, and LILFAVLFIVNFVIGGTTGVV. His69 lines the Fe(II)-heme a pocket. His246 serves as a coordination point for Cu cation. The 1'-histidyl-3'-tyrosine (His-Tyr) cross-link spans 246–250; the sequence is HPEVY. An O2-binding site is contributed by Tyr250. The Cu cation site is built by His295 and His296. Mg(2+) is bound by residues His374 and Asp375. His382 is a binding site for heme a3. 2 helical membrane-spanning segments follow: residues 382 to 402 and 416 to 436; these read HFHFVLSIGAIISLICFIVYI and LSLMAPIFMIAVLFTFLPMHF. His384 contacts Fe(II)-heme a. Residue Pro447 participates in Ca(2+) binding. The helical transmembrane segment at 458-478 threads the bilayer; the sequence is FICTLGATMMLVLKLTVLFII.

The protein belongs to the heme-copper respiratory oxidase family. Component of the cytochrome c oxidase (complex IV, CIV), a multisubunit enzyme composed of a catalytic core of 3 subunits and several supernumerary subunits. The complex exists as a monomer or a dimer and forms supercomplexes (SCs) in the inner mitochondrial membrane with ubiquinol-cytochrome c oxidoreductase (cytochrome b-c1 complex, complex III, CIII). It depends on heme as a cofactor. Cu cation is required as a cofactor.

Its subcellular location is the mitochondrion inner membrane. It carries out the reaction 4 Fe(II)-[cytochrome c] + O2 + 8 H(+)(in) = 4 Fe(III)-[cytochrome c] + 2 H2O + 4 H(+)(out). It participates in energy metabolism; oxidative phosphorylation. Functionally, component of the cytochrome c oxidase, the last enzyme in the mitochondrial electron transport chain which drives oxidative phosphorylation. The respiratory chain contains 3 multisubunit complexes succinate dehydrogenase (complex II, CII), ubiquinol-cytochrome c oxidoreductase (cytochrome b-c1 complex, complex III, CIII) and cytochrome c oxidase (complex IV, CIV), that cooperate to transfer electrons derived from NADH and succinate to molecular oxygen, creating an electrochemical gradient over the inner membrane that drives transmembrane transport and the ATP synthase. Cytochrome c oxidase is the component of the respiratory chain that catalyzes the reduction of oxygen to water. Electrons originating from reduced cytochrome c in the intermembrane space (IMS) are transferred via the dinuclear copper A center (CU(A)) of subunit 2 and heme A of subunit 1 to the active site in subunit 1, a binuclear center (BNC) formed by heme A3 and copper B (CU(B)). The BNC reduces molecular oxygen to 2 water molecules using 4 electrons from cytochrome c in the IMS and 4 protons from the mitochondrial matrix. This is Cytochrome c oxidase subunit 1 (MT-CO1) from Theileria annulata.